The primary structure comprises 167 residues: MKVYIIDYHRDDPKKCTGRKLIKLNFAELTRYGKGIILDPYSKRILSILDKDIALKTGITIVDTSWNSTSKIEFEKIKGEHRRLPILFAGNPTNYGIAYKLSSIEAVIASLYILNEVEEAIKIANIIKWGHTFLELNKELLESYRNKSENEILEIEREVIEKIIGEP.

The S-adenosyl-L-methionine site is built by threonine 17, valine 62, leucine 84, tyrosine 99, and serine 103.

Belongs to the TDD superfamily. TSR3 family.

It localises to the cytoplasm. The catalysed reaction is an N(1)-methylpseudouridine in rRNA + S-adenosyl-L-methionine = N(1)-methyl-N(3)-[(3S)-3-amino-3-carboxypropyl]pseudouridine in rRNA + S-methyl-5'-thioadenosine + H(+). Its function is as follows. Aminocarboxypropyltransferase that catalyzes the aminocarboxypropyl transfer on pseudouridine corresponding to position 914 in M.jannaschii 16S rRNA. It constitutes the last step in biosynthesis of the hypermodified N1-methyl-N3-(3-amino-3-carboxypropyl) pseudouridine (m1acp3-Psi). The chain is 16S rRNA aminocarboxypropyltransferase from Sulfurisphaera tokodaii (strain DSM 16993 / JCM 10545 / NBRC 100140 / 7) (Sulfolobus tokodaii).